The following is a 624-amino-acid chain: MEFIDYDKQYDVIVVGAGHAGCEAALAAARMGCETLLLTINLDAIALMSCNPAIGGSAKGHLVKEIDALGGEMGKNIDATGIQFRILNTRKGPAVRASRAQADKQLYRLRMKHVMEQQERLSLKQAEVTGIVVEDGEVRGVDTKVGVRYLGATVILTTGTFMRGLIHVGLTNYPGGRAGDLPSVGLSDQLRELGFAVGRLKTGTPARLDGRTIDFTRLEPQHGDDPPVPFSFSTERIDQPQVPCYIAYTNPRSHEIIRSGLDRSPLYAGVIEGIGPRYCPSIEDKVVRFPEKDRHQTFLEPEGRDTVEYYPSGLSTSLPIDIQWAFYRSIEGLERVEIMRPAYAIEYDYVDPIQLHASLETKLVRNLYHAGQINGTSGYEEAAGQGLMAGINAALRVRDKEPLILGRSEAYIGVMIDDLVTLGTREPYRMFTSRAEYRLLLREDNADLRLRERGHAVGLVPEGAYQRFLEKRERIGAELARLKGTKLLPSEADPDFLAAFSLTALQNALTYEQLLRRPDITYEELCRIDPRAAEVPPVVREQVEIQIKYQGYIERQLDQVERARKLEGTRVPAGFDYGALPGLSAEVREKLAKFRPDTLGQASRIQGVTPAAVGILSLALKARG.

Residues 16–21 (GAGHAG), Val-128, and Ser-183 contribute to the FAD site. An NAD(+)-binding site is contributed by 275-289 (GPRYCPSIEDKVVRF). Gln-372 serves as a coordination point for FAD.

It belongs to the MnmG family. In terms of assembly, homodimer. Heterotetramer of two MnmE and two MnmG subunits. Requires FAD as cofactor.

Its subcellular location is the cytoplasm. Functionally, NAD-binding protein involved in the addition of a carboxymethylaminomethyl (cmnm) group at the wobble position (U34) of certain tRNAs, forming tRNA-cmnm(5)s(2)U34. This chain is tRNA uridine 5-carboxymethylaminomethyl modification enzyme MnmG, found in Geobacter metallireducens (strain ATCC 53774 / DSM 7210 / GS-15).